The chain runs to 315 residues: Glutathione synthetase (315 aa).

In terms of domain architecture, ATP-grasp spans 125 to 310 (KLFTAWFSEF…ITGMLFDAIE (186 aa)). Residue 151 to 207 (HQAKGDIILKPLDGMGGTSIFRVKQDDPNLGVIIETLTQYGNQYAMAQAFIPEITKG) coordinates ATP. Mg(2+)-binding residues include E281 and N283.

Belongs to the prokaryotic GSH synthase family. Mg(2+) is required as a cofactor. Mn(2+) serves as cofactor.

It carries out the reaction gamma-L-glutamyl-L-cysteine + glycine + ATP = glutathione + ADP + phosphate + H(+). The protein operates within sulfur metabolism; glutathione biosynthesis; glutathione from L-cysteine and L-glutamate: step 2/2. The sequence is that of Glutathione synthetase from Shewanella oneidensis (strain ATCC 700550 / JCM 31522 / CIP 106686 / LMG 19005 / NCIMB 14063 / MR-1).